We begin with the raw amino-acid sequence, 172 residues long: Small ribosomal subunit protein uS5 (172 aa).

The region spanning 13–76 (LVEKMISVNR…EQARHNMMKI (64 aa)) is the S5 DRBM domain.

Belongs to the universal ribosomal protein uS5 family. As to quaternary structure, part of the 30S ribosomal subunit. Contacts proteins S4 and S8.

Functionally, with S4 and S12 plays an important role in translational accuracy. In terms of biological role, located at the back of the 30S subunit body where it stabilizes the conformation of the head with respect to the body. The polypeptide is Small ribosomal subunit protein uS5 (Chromobacterium violaceum (strain ATCC 12472 / DSM 30191 / JCM 1249 / CCUG 213 / NBRC 12614 / NCIMB 9131 / NCTC 9757 / MK)).